Reading from the N-terminus, the 602-residue chain is UvrABC system protein C (602 aa).

One can recognise a GIY-YIG domain in the interval 17 to 94; that stretch reads TTSGCYKMYS…IKEHKPDYNI (78 aa). In terms of domain architecture, UVR spans 199–234; that stretch reads SKLLDEIEIKMKEVIKREDFESAIKLKETKRSLIEI.

Belongs to the UvrC family. As to quaternary structure, interacts with UvrB in an incision complex.

It localises to the cytoplasm. Functionally, the UvrABC repair system catalyzes the recognition and processing of DNA lesions. UvrC both incises the 5' and 3' sides of the lesion. The N-terminal half is responsible for the 3' incision and the C-terminal half is responsible for the 5' incision. In Borrelia turicatae (strain 91E135), this protein is UvrABC system protein C.